Reading from the N-terminus, the 302-residue chain is RNA polymerase II holoenzyme cyclin-like subunit (302 aa).

A Cyclin N-terminal domain is found at 53-142 (QQLIKLGKRM…LGECEFSLIS (90 aa)).

It belongs to the cyclin family. Cyclin C subfamily. As to quaternary structure, component of the srb8-11 complex, a regulatory module of the Mediator complex.

It is found in the nucleus. Functionally, component of the srb8-11 complex. The srb8-11 complex is a regulatory module of the Mediator complex which is itself involved in regulation of basal and activated RNA polymerase II-dependent transcription. The srb8-11 complex may be involved in the transcriptional repression of a subset of genes regulated by Mediator. It may inhibit the association of the Mediator complex with RNA polymerase II to form the holoenzyme complex. The srb8-11 complex phosphorylates the C-terminal domain (CTD) of the largest subunit of RNA polymerase II. The polypeptide is RNA polymerase II holoenzyme cyclin-like subunit (ssn8) (Aspergillus fumigatus (strain ATCC MYA-4609 / CBS 101355 / FGSC A1100 / Af293) (Neosartorya fumigata)).